The sequence spans 591 residues: Oxaloacetate decarboxylase alpha chain (591 aa).

In terms of domain architecture, Pyruvate carboxyltransferase spans 3-263; sequence IAITDVVLRD…DTGLDILKLE (261 aa). Residues 518–591 enclose the Biotinyl-binding domain; that stretch reads PAGAGTPVTA…SVGDTLMTLA (74 aa). Lysine 557 carries the post-translational modification N6-biotinyllysine.

In terms of assembly, composed of three chains (alpha, beta, and gamma). Biotin serves as cofactor.

It carries out the reaction oxaloacetate + 2 Na(+)(in) + H(+) = pyruvate + 2 Na(+)(out) + CO2. Its function is as follows. Catalyzes the decarboxylation of oxaloacetate coupled to Na(+) translocation. This Salmonella typhimurium (strain LT2 / SGSC1412 / ATCC 700720) protein is Oxaloacetate decarboxylase alpha chain (oadA1).